The primary structure comprises 631 residues: Mini-chromosome maintenance complex-binding protein (631 aa).

Composition is skewed to polar residues over residues 148 to 157 (ARVVPSTSYV) and 173 to 192 (TQCQQTKDISQGAQSSSESH). A disordered region spans residues 148 to 218 (ARVVPSTSYV…SSSSHCTSSL (71 aa)). Basic and acidic residues predominate over residues 193–202 (GNTEPKRQET). The segment covering 206–217 (SQDSSSSHCTSS) has biased composition (low complexity).

It belongs to the MCMBP family. As to quaternary structure, interacts with the mcm complex: associates with the mcm3-7 complex which lacks mcm2, while it does not interact with the mcm complex when mcm2 is present (mcm2-7 complex).

It is found in the nucleus. In terms of biological role, associated component of the mcm complex that acts as a regulator of DNA replication. Binds to the MCM complex during late S phase and promotes the disassembly of the mcm complex from chromatin, thereby acting as a key regulator of pre-replication complex (pre-RC) unloading from replicated DNA. Can dissociate the mcm complex without addition of ATP; probably acts by destabilizing interactions of each individual subunits of the mcm complex. Required for sister chromatid cohesion. The protein is Mini-chromosome maintenance complex-binding protein (mcmbp) of Danio rerio (Zebrafish).